Here is a 263-residue protein sequence, read N- to C-terminus: Hydroxyacylglutathione hydrolase (263 aa).

Histidine 55, histidine 57, aspartate 59, histidine 60, histidine 117, aspartate 134, and histidine 172 together coordinate Zn(2+).

This sequence belongs to the metallo-beta-lactamase superfamily. Glyoxalase II family. As to quaternary structure, monomer. The cofactor is Zn(2+).

It catalyses the reaction an S-(2-hydroxyacyl)glutathione + H2O = a 2-hydroxy carboxylate + glutathione + H(+). It functions in the pathway secondary metabolite metabolism; methylglyoxal degradation; (R)-lactate from methylglyoxal: step 2/2. Its function is as follows. Thiolesterase that catalyzes the hydrolysis of S-D-lactoyl-glutathione to form glutathione and D-lactic acid. In Shewanella baltica (strain OS195), this protein is Hydroxyacylglutathione hydrolase.